Here is a 122-residue protein sequence, read N- to C-terminus: Large ribosomal subunit protein uL14 (122 aa).

Belongs to the universal ribosomal protein uL14 family. As to quaternary structure, part of the 50S ribosomal subunit. Forms a cluster with proteins L3 and L19. In the 70S ribosome, L14 and L19 interact and together make contacts with the 16S rRNA in bridges B5 and B8.

Functionally, binds to 23S rRNA. Forms part of two intersubunit bridges in the 70S ribosome. This chain is Large ribosomal subunit protein uL14, found in Psychromonas ingrahamii (strain DSM 17664 / CCUG 51855 / 37).